Reading from the N-terminus, the 177-residue chain is MDFHGTTVLCVKRNDSVIIASDGQVTMGNTVLKHNAKKIRKLYNGQVLTGFAGSTADAFTLFERFEGKLETYKGNLLRAAVELAKDWRTDKILRRLEALLIVADKEHILIISGNGDVIEPEDQVAAIGSGGPFAFAAAKALYDNTELPAKEIAIKAMEIASKICIYTNNIIITEELS.

T6 is an active-site residue. Na(+) contacts are provided by S161, C164, and T167.

The protein belongs to the peptidase T1B family. HslV subfamily. A double ring-shaped homohexamer of HslV is capped on each side by a ring-shaped HslU homohexamer. The assembly of the HslU/HslV complex is dependent on binding of ATP.

The protein resides in the cytoplasm. The enzyme catalyses ATP-dependent cleavage of peptide bonds with broad specificity.. Allosterically activated by HslU binding. In terms of biological role, protease subunit of a proteasome-like degradation complex believed to be a general protein degrading machinery. The polypeptide is ATP-dependent protease subunit HslV (Thermodesulfovibrio yellowstonii (strain ATCC 51303 / DSM 11347 / YP87)).